Reading from the N-terminus, the 181-residue chain is Oligoribonuclease (181 aa).

Residues 8–171 (LIWIDLEMTG…DDIRESVAEL (164 aa)) enclose the Exonuclease domain. Y129 is an active-site residue.

This sequence belongs to the oligoribonuclease family.

It localises to the cytoplasm. Functionally, 3'-to-5' exoribonuclease specific for small oligoribonucleotides. This is Oligoribonuclease from Photorhabdus laumondii subsp. laumondii (strain DSM 15139 / CIP 105565 / TT01) (Photorhabdus luminescens subsp. laumondii).